We begin with the raw amino-acid sequence, 410 residues long: Homeobox protein Hox-A3a (410 aa).

The disordered stretch occupies residues 79 to 126 (VTDTSDNKQPPTAPSGPSSPSSLNQIPNIDSAAKNPVHVSPTPSTRKH). The short motif at 127-132 (IFPWMK) is the Antp-type hexapeptide element. Positions 163-222 (SKRARTAYTSAQLVELEKEFHFNRYLCRPRRVEMANLLNLTERQIKIWFQNRRMKYKKDQ) form a DNA-binding region, homeobox. The interval 222-249 (QKGLGMMPSPGAQSPHSPVSLSSGGGGG) is disordered.

It belongs to the Antp homeobox family.

It localises to the nucleus. Its function is as follows. Sequence-specific transcription factor which is part of a developmental regulatory system that provides cells with specific positional identities on the anterior-posterior axis. In Danio rerio (Zebrafish), this protein is Homeobox protein Hox-A3a (hoxa3a).